Reading from the N-terminus, the 163-residue chain is Putative pre-16S rRNA nuclease (163 aa).

It belongs to the YqgF nuclease family.

The protein resides in the cytoplasm. Could be a nuclease involved in processing of the 5'-end of pre-16S rRNA. In Rhizobium leguminosarum bv. trifolii (strain WSM2304), this protein is Putative pre-16S rRNA nuclease.